We begin with the raw amino-acid sequence, 1238 residues long: Cullin-associated NEDD8-dissociated protein 1 (1238 aa).

HEAT repeat units follow at residues 41–78, 126–167, 171–208, 210–247, and 251–292; these read TYEN…RVKD, LVIK…KYGS, GDLE…PSPD, LFNS…SSGY, and KYLP…KCQK. The tract at residues 315 to 354 is disordered; the sequence is YSDDGEGEEDGDEEEEEMETSGDNDEEQEEEEEEEDLSDD. 9 HEAT repeats span residues 382–419, 432–469, 603–641, 646–683, 688–725, 853–890, 933–966, 967–1004, and 1008–1045; these read ELYQ…QLNK, QQVP…IIPG, EIQS…SSIN, SILP…VCPN, SLLT…NYSE, HENE…CSLQ, PFLQ…KLSM, IEPN…ENKE, and QYLA…NKPN.

It belongs to the CAND family.

It is found in the nucleus. Functionally, key assembly factor of SCF (SKP1-CUL1-F-box protein) E3 ubiquitin ligase complexes that promotes the exchange of the substrate-recognition F-box subunit in SCF complexes, thereby playing a key role in the cellular repertoire of SCF complexes. Acts as a F-box protein exchange factor. The polypeptide is Cullin-associated NEDD8-dissociated protein 1 (cand1) (Dictyostelium discoideum (Social amoeba)).